Reading from the N-terminus, the 157-residue chain is Transcriptional repressor NrdR (157 aa).

Positions 1 to 21 are disordered; it reads MKCPHCGNNGSRVVDSRPTDE. A zinc finger lies at 3–34; the sequence is CPHCGNNGSRVVDSRPTDEGRVIRRRRECEKC. The ATP-cone domain occupies 49-139; the sequence is LLVIKKNGSR…VYRQFKDMHV (91 aa).

The protein belongs to the NrdR family. It depends on Zn(2+) as a cofactor.

Its function is as follows. Negatively regulates transcription of bacterial ribonucleotide reductase nrd genes and operons by binding to NrdR-boxes. The sequence is that of Transcriptional repressor NrdR from Pediococcus pentosaceus (strain ATCC 25745 / CCUG 21536 / LMG 10740 / 183-1w).